Reading from the N-terminus, the 410-residue chain is Phosphoglycerate kinase (410 aa).

Substrate-binding positions include 22-24 (DIN), Arg39, 62-65 (HQSR), Arg119, and Arg159. ATP-binding positions include Glu332 and 358-361 (GGHL).

This sequence belongs to the phosphoglycerate kinase family. As to quaternary structure, homodimer.

Its subcellular location is the cytoplasm. It catalyses the reaction (2R)-3-phosphoglycerate + ATP = (2R)-3-phospho-glyceroyl phosphate + ADP. The protein operates within carbohydrate degradation; glycolysis; pyruvate from D-glyceraldehyde 3-phosphate: step 2/5. The chain is Phosphoglycerate kinase (pgk) from Methanothermus fervidus (strain ATCC 43054 / DSM 2088 / JCM 10308 / V24 S).